The primary structure comprises 317 residues: USG-1 protein homolog (317 aa).

This sequence belongs to the aspartate-semialdehyde dehydrogenase family.

This chain is USG-1 protein homolog (usg), found in Haemophilus influenzae (strain ATCC 51907 / DSM 11121 / KW20 / Rd).